The chain runs to 430 residues: UPF0597 protein CV_1824 (430 aa).

The protein belongs to the UPF0597 family.

This chain is UPF0597 protein CV_1824, found in Chromobacterium violaceum (strain ATCC 12472 / DSM 30191 / JCM 1249 / CCUG 213 / NBRC 12614 / NCIMB 9131 / NCTC 9757 / MK).